We begin with the raw amino-acid sequence, 188 residues long: EP300-interacting inhibitor of differentiation 1 (188 aa).

A disordered region spans residues 1–122 (MSEMAELSEL…PEEEQLSGAG (122 aa)). 2 stretches are compositionally biased toward acidic residues: residues 53–64 (LEEEGPMEEEEA) and 94–117 (FESEDEGEEFDDWEDDYDYPEEEQ). The interaction with NR0B2 stretch occupies residues 55-121 (EEGPMEEEEA…YPEEEQLSGA (67 aa)). An LXCXE motif motif is present at residues 179-183 (LGCDE).

In terms of assembly, interacts via its LXCXE motif with the entire pocket region of RB1. Interacts with EP300, NR0B2 and TRIM27.

The protein localises to the nucleus. It is found in the cytoplasm. Functionally, interacts with RB1 and EP300 and acts as a repressor of MYOD1 transactivation. Inhibits EP300 and CBP histone acetyltransferase activity. May be involved in coupling cell cycle exit to the transcriptional activation of genes required for cellular differentiation. May act as a candidate coinhibitory factor for NR0B2 that can be directly linked to transcription inhibitory mechanisms. The polypeptide is EP300-interacting inhibitor of differentiation 1 (Pongo abelii (Sumatran orangutan)).